The chain runs to 152 residues: Large ribosomal subunit protein bL9 (152 aa).

This sequence belongs to the bacterial ribosomal protein bL9 family.

In terms of biological role, binds to the 23S rRNA. This Synechocystis sp. (strain ATCC 27184 / PCC 6803 / Kazusa) protein is Large ribosomal subunit protein bL9.